Here is a 305-residue protein sequence, read N- to C-terminus: MASRKENAKSANRVLRISQLDALELNKALEQLVWSQFTQCFHGFKPGLLARFEPEVKACLWVFLWRFTIYSKNATVGQSVLNIKYKNDFSPNLRYQPPSKNQKIWYAVCTIGGRWLEERCYDLFRNHHLASFGKVKQCVNFVIGLLKLGGLINFLIFLQRGKFATLTERLLGIHSVFCKPQNICEVGFEYMNRELLWHGFAEFLIFLLPLINVQKLKAKLSSWCIPLTGAPNSDNTLATSGKECALCGEWPTMPHTIGCEHIFCYFCAKSSFLFDVYFTCPKCGTEVHSLQPLKSGIEMSEVNAL.

At 1–15 the chain is on the peroxisomal matrix side; it reads MASRKENAKSANRVL. The helical transmembrane segment at 16–42 threads the bilayer; the sequence is RISQLDALELNKALEQLVWSQFTQCFH. Residues 43 to 48 lie on the Cytoplasmic side of the membrane; it reads GFKPGL. A helical transmembrane segment spans residues 49-74; that stretch reads LARFEPEVKACLWVFLWRFTIYSKNA. At 75–98 the chain is on the peroxisomal matrix side; that stretch reads TVGQSVLNIKYKNDFSPNLRYQPP. Residue Lys84 is modified to N6-acetyllysine. A helical membrane pass occupies residues 99-125; the sequence is SKNQKIWYAVCTIGGRWLEERCYDLFR. At 126–133 the chain is on the cytoplasmic side; sequence NHHLASFG. The chain crosses the membrane as a helical span at residues 134 to 160; the sequence is KVKQCVNFVIGLLKLGGLINFLIFLQR. The Peroxisomal matrix portion of the chain corresponds to 161 to 187; that stretch reads GKFATLTERLLGIHSVFCKPQNICEVG. A helical transmembrane segment spans residues 188-211; sequence FEYMNRELLWHGFAEFLIFLLPLI. Residues 212–305 are Cytoplasmic-facing; that stretch reads NVQKLKAKLS…GIEMSEVNAL (94 aa). Positions 244, 247, 259, 261, 264, 267, 280, and 283 each coordinate Zn(2+). The RING-type zinc-finger motif lies at 244–284; that stretch reads CALCGEWPTMPHTIGCEHIFCYFCAKSSFLFDVYFTCPKCG.

The protein belongs to the pex2/pex10/pex12 family. As to quaternary structure, component of the PEX2-PEX10-PEX12 retrotranslocation channel, composed of PEX2, PEX10 and PEX12. Forms intramolecular and intermolecular disulfide bonds in response to reactive oxygen species (ROS), promoting higher stability.

Its subcellular location is the peroxisome membrane. The enzyme catalyses [E2 ubiquitin-conjugating enzyme]-S-ubiquitinyl-L-cysteine + [acceptor protein]-L-cysteine = [E2 ubiquitin-conjugating enzyme]-L-cysteine + [acceptor protein]-S-ubiquitinyl-L-cysteine.. The catalysed reaction is S-ubiquitinyl-[E2 ubiquitin-conjugating enzyme]-L-cysteine + [acceptor protein]-L-lysine = [E2 ubiquitin-conjugating enzyme]-L-cysteine + N(6)-ubiquitinyl-[acceptor protein]-L-lysine.. It participates in protein modification; protein ubiquitination. In terms of biological role, E3 ubiquitin-protein ligase component of a retrotranslocation channel required for peroxisome organization by mediating export of the PEX5 receptor from peroxisomes to the cytosol, thereby promoting PEX5 recycling. The retrotranslocation channel is composed of PEX2, PEX10 and PEX12; each subunit contributing transmembrane segments that coassemble into an open channel that specifically allows the passage of PEX5 through the peroxisomal membrane. PEX2 also regulates peroxisome organization by acting as a E3 ubiquitin-protein ligase. PEX2 ubiquitinates PEX5 during its passage through the retrotranslocation channel: catalyzes monoubiquitination of PEX5 at 'Cys-11', a modification that acts as a signal for PEX5 extraction into the cytosol. Required for pexophagy in response to starvation by mediating ubiquitination of peroxisomal proteins, such as PEX5 and ABCD3/PMP70. Also involved in the response to reactive oxygen species (ROS) by mediating 'Lys-48'-linked polyubiquitination and subsequent degradation of PNPLA2/ATGL, thereby regulating lipolysis. In Homo sapiens (Human), this protein is Peroxisome biogenesis factor 2.